A 692-amino-acid polypeptide reads, in one-letter code: Elongation factor G (692 aa).

The tr-type G domain maps to 9–284; the sequence is HMVRNIGIAA…AVVDYLPAPD (276 aa). GTP contacts are provided by residues 18 to 25, 82 to 86, and 136 to 139; these read AHIDAGKT, DTPGH, and NKMD.

Belongs to the TRAFAC class translation factor GTPase superfamily. Classic translation factor GTPase family. EF-G/EF-2 subfamily.

The protein localises to the cytoplasm. Its function is as follows. Catalyzes the GTP-dependent ribosomal translocation step during translation elongation. During this step, the ribosome changes from the pre-translocational (PRE) to the post-translocational (POST) state as the newly formed A-site-bound peptidyl-tRNA and P-site-bound deacylated tRNA move to the P and E sites, respectively. Catalyzes the coordinated movement of the two tRNA molecules, the mRNA and conformational changes in the ribosome. This is Elongation factor G from Campylobacter curvus (strain 525.92).